The following is a 376-amino-acid chain: Lipoyl synthase 1, mitochondrial (376 aa).

Residues Cys-109, Cys-114, Cys-120, Cys-140, Cys-144, Cys-147, and Ser-356 each coordinate [4Fe-4S] cluster. Residues 125–345 (ETGTATATIM…QTLGMEMGFR (221 aa)) enclose the Radical SAM core domain.

The protein belongs to the radical SAM superfamily. Lipoyl synthase family. It depends on [4Fe-4S] cluster as a cofactor.

It is found in the mitochondrion. The catalysed reaction is [[Fe-S] cluster scaffold protein carrying a second [4Fe-4S](2+) cluster] + N(6)-octanoyl-L-lysyl-[protein] + 2 oxidized [2Fe-2S]-[ferredoxin] + 2 S-adenosyl-L-methionine + 4 H(+) = [[Fe-S] cluster scaffold protein] + N(6)-[(R)-dihydrolipoyl]-L-lysyl-[protein] + 4 Fe(3+) + 2 hydrogen sulfide + 2 5'-deoxyadenosine + 2 L-methionine + 2 reduced [2Fe-2S]-[ferredoxin]. The protein operates within protein modification; protein lipoylation via endogenous pathway; protein N(6)-(lipoyl)lysine from octanoyl-[acyl-carrier-protein]: step 2/2. Catalyzes the radical-mediated insertion of two sulfur atoms into the C-6 and C-8 positions of the octanoyl moiety bound to the lipoyl domains of lipoate-dependent enzymes, thereby converting the octanoylated domains into lipoylated derivatives. The chain is Lipoyl synthase 1, mitochondrial from Pisum sativum (Garden pea).